A 214-amino-acid chain; its full sequence is Probable GTP-binding protein EngB (214 aa).

One can recognise an EngB-type G domain in the interval 40–212 (SLPEIVFVGK…KASFAQCIKH (173 aa)). Residues 48 to 55 (GKSNVGKS), 75 to 79 (GRTRQ), 93 to 96 (DLPG), 160 to 163 (TKSD), and 191 to 193 (VSS) each bind GTP. The Mg(2+) site is built by serine 55 and threonine 77.

It belongs to the TRAFAC class TrmE-Era-EngA-EngB-Septin-like GTPase superfamily. EngB GTPase family. It depends on Mg(2+) as a cofactor.

Functionally, necessary for normal cell division and for the maintenance of normal septation. This is Probable GTP-binding protein EngB from Rickettsia prowazekii (strain Madrid E).